The primary structure comprises 82 residues: Defensin-like protein 275 (82 aa).

A signal peptide spans 1-23 (MALSKFQLVALLITYTLLFSCQS). 4 disulfides stabilise this stretch: cysteine 36-cysteine 78, cysteine 42-cysteine 65, cysteine 48-cysteine 76, and cysteine 52-cysteine 77.

The protein belongs to the DEFL family.

The protein resides in the secreted. The polypeptide is Defensin-like protein 275 (Arabidopsis thaliana (Mouse-ear cress)).